The sequence spans 366 residues: Inositol 2-dehydrogenase (366 aa).

Belongs to the Gfo/Idh/MocA family. Homotetramer.

It catalyses the reaction myo-inositol + NAD(+) = scyllo-inosose + NADH + H(+). Functionally, involved in the oxidation of myo-inositol (MI) to 2-keto-myo-inositol (2KMI or 2-inosose). The polypeptide is Inositol 2-dehydrogenase (Rhodococcus jostii (strain RHA1)).